The sequence spans 117 residues: Nascent polypeptide-associated complex protein (117 aa).

The 69-residue stretch at 9 to 77 (PKQLKQMQRA…ARECDLEAEV (69 aa)) folds into the NAC-A/B domain.

This sequence belongs to the NAC-alpha family. In terms of assembly, homodimer. Interacts with the ribosome. Binds ribosomal RNA.

In terms of biological role, contacts the emerging nascent chain on the ribosome. The protein is Nascent polypeptide-associated complex protein of Methanothermobacter marburgensis (strain ATCC BAA-927 / DSM 2133 / JCM 14651 / NBRC 100331 / OCM 82 / Marburg) (Methanobacterium thermoautotrophicum).